A 112-amino-acid chain; its full sequence is Putative movement protein (112 aa).

The helical transmembrane segment at Ile27–Cys47 threads the bilayer. The interval Thr77–Ser112 is disordered. Residues Thr84–Glu98 are compositionally biased toward basic and acidic residues. Positions Asn101–Ser112 are enriched in polar residues.

This sequence belongs to the nanovirus movement protein family.

It is found in the host cell membrane. In terms of biological role, may transport viral genome to neighboring plant cells directly through plasmosdesmata, without any budding. The movement protein allows efficient cell to cell propagation, by bypassing the host cell wall barrier. The protein is Putative movement protein (DNA-M) of Subterranean clover stunt virus (strain F) (SCSV).